Here is a 327-residue protein sequence, read N- to C-terminus: Phenylalanine--tRNA ligase alpha subunit (327 aa).

Residue E252 coordinates Mg(2+).

Belongs to the class-II aminoacyl-tRNA synthetase family. Phe-tRNA synthetase alpha subunit type 1 subfamily. Tetramer of two alpha and two beta subunits. The cofactor is Mg(2+).

It is found in the cytoplasm. It carries out the reaction tRNA(Phe) + L-phenylalanine + ATP = L-phenylalanyl-tRNA(Phe) + AMP + diphosphate + H(+). The chain is Phenylalanine--tRNA ligase alpha subunit from Cronobacter sakazakii (strain ATCC BAA-894) (Enterobacter sakazakii).